Consider the following 2892-residue polypeptide: E3 ubiquitin-protein ligase lubel (2892 aa).

Disordered stretches follow at residues 23-55, 125-252, 395-423, 483-631, 644-672, 685-737, 757-865, and 949-975; these read DRIG…KSTP, KQHM…QLEK, SQQH…QFGS, PSAA…ESEG, QKLQ…ENTQ, AHEE…PDHE, CCKT…DNSL, and DRFT…QQES. Positions 40 to 52 are enriched in low complexity; it reads GLPKAPALPPKAK. The segment covering 189–198 has biased composition (gly residues); it reads GWRGSLGGGA. The span at 206-215 shows a compositional bias: polar residues; that stretch reads ATSSANQMNN. 2 stretches are compositionally biased toward low complexity: residues 402–412 and 483–503; these read AQHPHQALPQH and PSAA…TPSR. The span at 516 to 528 shows a compositional bias: acidic residues; that stretch reads VDDELTDDEDSDQ. The span at 535 to 546 shows a compositional bias: polar residues; that stretch reads VSNRSGMTSASR. Residues 547 to 560 are compositionally biased toward basic residues; sequence SQHHQNHIQPRQRR. Over residues 606-623 the composition is skewed to polar residues; that stretch reads GTLTRNKTATDSARTSRI. Residues 647-670 show a composition bias toward basic and acidic residues; it reads QEADQHKSSKKAEPKRKPEMKDEN. Residues 801-813 are compositionally biased toward polar residues; the sequence is KPTTKSQQPSQKS. Composition is skewed to low complexity over residues 818 to 837 and 846 to 856; these read SKTT…AVNS and KTPSKSTLKTS. The region spanning 1042–1187 is the UBA-like 1 domain; sequence MHIILKELEL…LMRIWGSPNG (146 aa). Disordered regions lie at residues 1214–1252, 1477–1520, 1557–1653, 1717–2019, 2032–2082, 2191–2316, and 2411–2431; these read LQPP…SPYQ, LPTA…KLET, AEVQ…KILS, STTI…NLSE, RDEI…EGNT, SAPP…PLRS, and DYET…EPQK. Over residues 1241–1252 the composition is skewed to polar residues; the sequence is VKSTYATPSPYQ. Residues 1510–1519 show a composition bias toward basic and acidic residues; sequence EELRQQEKLE. Residues 1560 to 1571 are compositionally biased toward polar residues; that stretch reads QVQSDDQPSTSR. The segment covering 1576–1587 has biased composition (basic residues); the sequence is RAKRSQQSRKGR. Positions 1595–1607 are enriched in polar residues; sequence PTNRTKLPNNIDQ. Positions 1608–1627 are enriched in basic and acidic residues; the sequence is KVNESKTAAKETEAVKDKDL. Polar residues-rich tracts occupy residues 1630-1653, 1717-1726, and 1764-1779; these read AASN…KILS, STTISEQSEG, and KSPT…TSHI. Residues 1822–1834 show a composition bias toward low complexity; that stretch reads LSSSSLRSESRSS. Polar residues predominate over residues 1859 to 1881; that stretch reads TVSSPKSEQLSDNQEVNLVSQET. Acidic residues predominate over residues 1918–1927; that stretch reads DSDEVFEDAP. Positions 1953 to 1963 are enriched in basic and acidic residues; the sequence is DGQRAETKSPE. 2 stretches are compositionally biased toward acidic residues: residues 1964-1975 and 2036-2079; these read DEVVILLDEESQ and SMDE…DGEE. 2 stretches are compositionally biased toward low complexity: residues 2214-2230 and 2269-2291; these read PSEV…ALPI and SGTA…TVSK. Positions 2297-2308 are enriched in polar residues; it reads NEPTNKSNSTPL. Positions 2411–2425 are enriched in acidic residues; the sequence is DYETSATEEEQEEPN. A UBA-like 2 domain is found at 2457 to 2513; sequence DPAILARKYVDQELVTNIAEAQIAATLVSMKFSEDVALWAARECSDLDQAIAMLQQE. The tract at residues 2510–2748 is TRIAD supradomain; sequence LQQECELCMN…LGLHAHHPRN (239 aa). Zn(2+) is bound by residues cysteine 2514, cysteine 2517, cysteine 2537, cysteine 2540, cysteine 2618, cysteine 2621, cysteine 2636, cysteine 2639, cysteine 2644, cysteine 2647, histidine 2655, cysteine 2660, cysteine 2690, and cysteine 2693. The segment at 2514–2564 adopts an RING-type 1 zinc-finger fold; the sequence is CELCMNSYPMNQMVSMLKCLHKCCKQCAKSYFTVQITDRSINDCSCPFCKL. The tract at residues 2514–2892 is necessary for linear polyubiquitination and sufficent for inducing DptA in the intestine; that stretch reads CELCMNSYPM…IKKHIPLKSA (379 aa). The segment at 2601–2660 adopts an IBR-type zinc-finger fold; it reads QRKLRDRSLLQDPNFKWCIQCSSGFFARPKQKRLICPDCGSVTCAQCRKPWERQHEGSSC. The RING-type 2; atypical zinc-finger motif lies at 2690-2720; sequence CPKCKFRYSLARGGCMHFTCTQCKFEFCYGC. Cysteine 2704 is an active-site residue. Zn(2+) contacts are provided by cysteine 2709 and cysteine 2712.

It belongs to the RBR family.

It carries out the reaction [E2 ubiquitin-conjugating enzyme]-S-ubiquitinyl-L-cysteine + [acceptor protein]-L-lysine = [E2 ubiquitin-conjugating enzyme]-L-cysteine + [acceptor protein]-N(6)-ubiquitinyl-L-lysine.. Functionally, E3 ubiquitin-protein ligase which conjugates linear 'Met-1'- and 'Lys-63'-linked polyubiquitin chains to substrates and plays a crucial role in the NF-kappa-B intestinal inflammatory response to oral infection and in the heat stress response. Preferentially interacts with 'Lys-63'-linked, and to a lesser extent 'Lys-48'-linked, polyubiquitin chains. Upon oral infection with a Gram-negative bacterium E.carotovora subsp. carotovora 15, functions with the E2 ubiquitin-conjugating enzyme Ubc10 to mediate the conjugation of 'Lys-63'- and linear 'Met-1'-linked polyubiquitin chains to the substrate key which is essential for activation of the NF-kappa-B signaling cascade in the adult intestinal epithelium. It is not required for systemic immune response to septic infection with either E.carotovora subsp. carotovora 15 or Gram-positive M.luteus bacteria. Function in controlling linear ubiquitination is also essential for regulating the heat stress response in adults. This function may require the E2 ubiquitin-conjugating enzymes Ubc10 or eff. This Drosophila melanogaster (Fruit fly) protein is E3 ubiquitin-protein ligase lubel.